The sequence spans 491 residues: MTDLTSLTLAEARKGLASKTFTSLELTDAHLKAMEEARALNAFVMETPDQARAMAREADARIGKGEAGPLAGIPLGIKDLFATKDVRTTACSKILGNFVPTYESTVTSQLWRDGAVMLGKLNNDEFAMGSSNETSCFGPVGNPWRREGSNTTLVPGGSSGGSASAVAALLCMGATATDTGGSIRQPAAFTATVGIKPTYGRCSRWGIVAFASSLDQAGPIARSTRDAAILLRSMAGHDPKDTTSVDIPVPDYEAAIGRSVKGMKIGIPREYRLDGMPAEIEKLWSDGADWLKAAGAELVEVSLPHTKYALPAYYIVAPAEASSNLARYDGVRYGLRVSGKSIGELYENTRAEGFGPEVRRRVMIGTYVLSAGYYDAYYIRAQKVRTLIKRDFEDCFAKGVNAILTPATPSAAFGIGEKGGADPVEMYLNDIFTVTVNMAGLPGIAVPAGKDSQGLPLGLQLIGRPFDEETLFSLGEVIEQAAGRFTPVRWW.

Active-site charge relay system residues include Lys78 and Ser158. Catalysis depends on Ser182, which acts as the Acyl-ester intermediate.

Belongs to the amidase family. GatA subfamily. Heterotrimer of A, B and C subunits.

The enzyme catalyses L-glutamyl-tRNA(Gln) + L-glutamine + ATP + H2O = L-glutaminyl-tRNA(Gln) + L-glutamate + ADP + phosphate + H(+). Functionally, allows the formation of correctly charged Gln-tRNA(Gln) through the transamidation of misacylated Glu-tRNA(Gln) in organisms which lack glutaminyl-tRNA synthetase. The reaction takes place in the presence of glutamine and ATP through an activated gamma-phospho-Glu-tRNA(Gln). The protein is Glutamyl-tRNA(Gln) amidotransferase subunit A of Bradyrhizobium sp. (strain BTAi1 / ATCC BAA-1182).